A 1006-amino-acid chain; its full sequence is Probable protein phosphatase DDB_G0279461 (1006 aa).

Polar residues predominate over residues 1–12 (MMVPSLSTSISS). Disordered stretches follow at residues 1 to 119 (MMVP…NNKE), 146 to 188 (SHAS…RSNS), 214 to 269 (SSED…NGIR), 312 to 387 (DAES…PPNQ), 459 to 513 (NINN…NNIQ), 525 to 563 (DYNIQEGNDINNDNYEIRVSNNDDDNDSSNNNNNNNSKF), and 604 to 642 (GSIPTDEDQNNNNNKNKNTTTTTTTTNTTTTTTTTTSAS). Over residues 59–69 (NEEEGTADNEL) the composition is skewed to acidic residues. A coiled-coil region spans residues 65–122 (ADNELESLMSLVNDNNNNNNNTSGIDDDNNNDIDDNNNNNNNNNNNNNNNNNNKEGLN). The segment covering 77-88 (NDNNNNNNNTSG) has biased composition (low complexity). A compositionally biased stretch (acidic residues) spans 89–99 (IDDDNNNDIDD). The segment covering 100–117 (NNNNNNNNNNNNNNNNNN) has biased composition (low complexity). The segment covering 146–158 (SHASVSNQSSNGS) has biased composition (polar residues). Low complexity-rich tracts occupy residues 220-234 (SCHNSNNNNKNNKNN), 244-254 (NINNNNNNNCN), and 316-387 (NYNN…PPNQ). The stretch at 450–516 (KIDNLNKNIN…NNNNNIQDIQ (67 aa)) forms a coiled coil. A compositionally biased stretch (polar residues) spans 466–481 (TDSQQPLPSIDVNFSH). Over residues 482–511 (NNNNNNNDNDNNNNNNNNNNNNNNNNNNNN) the composition is skewed to low complexity. Polar residues predominate over residues 525-538 (DYNIQEGNDINNDN). Composition is skewed to low complexity over residues 552-561 (SSNNNNNNNS) and 613-639 (NNNNNKNKNTTTTTTTTNTTTTTTTTT). In terms of domain architecture, PPM-type phosphatase spans 744 to 1005 (DINKRGLKRA…DNISIIVVTL (262 aa)). Mn(2+)-binding residues include D784, G785, D956, and D996.

In the C-terminal section; belongs to the PP2C family. Mg(2+) is required as a cofactor. Mn(2+) serves as cofactor.

The catalysed reaction is O-phospho-L-seryl-[protein] + H2O = L-seryl-[protein] + phosphate. It catalyses the reaction O-phospho-L-threonyl-[protein] + H2O = L-threonyl-[protein] + phosphate. The polypeptide is Probable protein phosphatase DDB_G0279461 (Dictyostelium discoideum (Social amoeba)).